Consider the following 152-residue polypeptide: Spermine/spermidine N(1)-acetyltransferase (152 aa).

Residues 3 to 152 (INIKAVTDDN…NGEKVMVKEL (150 aa)) enclose the N-acetyltransferase domain. Acetyl-CoA is bound by residues 82–84 (FFI), 89–95 (QGKGLGK), and 122–131 (NIHAIRLYQR). Catalysis depends on Tyr-129, which acts as the Proton donor.

The protein belongs to the acetyltransferase family.

It catalyses the reaction an alkane-alpha,omega-diamine + acetyl-CoA = an N-acetylalkane-alpha,omega-diamine + CoA + H(+). It carries out the reaction spermine + acetyl-CoA = N(1)-acetylspermine + CoA + H(+). The enzyme catalyses spermidine + acetyl-CoA = N(1)-acetylspermidine + CoA + H(+). It functions in the pathway amine and polyamine degradation; spermine degradation. Its pathway is amine and polyamine degradation; spermidine degradation. Putrescine and N(8)-acetylspermidine are competitive inhibitors of spermidine acetylation. Acetylates both spermidine and spermine at primary propyl amine moieties, with spermine being the preferred substrate. This is Spermine/spermidine N(1)-acetyltransferase (bltD) from Bacillus subtilis (strain 168).